We begin with the raw amino-acid sequence, 186 residues long: MRVGVLSFQGGVVEHLEHIEKLNGKPVKVRSLEDLQKIDRLIIPGGESTTIGKFLKQSNMLQPLREKIYGGMPVWGTCAGMILLARKIENSEVNYINAIDITVRRNAYGSQVDSFNTKALIEEISLNEMPLVFIRAPYITRIGETVKALCTIDKNIVAAKSNNVLVTSFHPELADNLEFHEYFMKL.

Residue 46-48 (GES) participates in L-glutamine binding. The active-site Nucleophile is the cysteine 78. L-glutamine contacts are provided by residues arginine 105 and 134–135 (IR). Residues histidine 170 and glutamate 172 each act as charge relay system in the active site.

The protein belongs to the glutaminase PdxT/SNO family. In terms of assembly, in the presence of PdxS, forms a dodecamer of heterodimers. Only shows activity in the heterodimer.

The enzyme catalyses aldehydo-D-ribose 5-phosphate + D-glyceraldehyde 3-phosphate + L-glutamine = pyridoxal 5'-phosphate + L-glutamate + phosphate + 3 H2O + H(+). It carries out the reaction L-glutamine + H2O = L-glutamate + NH4(+). It functions in the pathway cofactor biosynthesis; pyridoxal 5'-phosphate biosynthesis. Its function is as follows. Catalyzes the hydrolysis of glutamine to glutamate and ammonia as part of the biosynthesis of pyridoxal 5'-phosphate. The resulting ammonia molecule is channeled to the active site of PdxS. The protein is Pyridoxal 5'-phosphate synthase subunit PdxT of Clostridium acetobutylicum (strain ATCC 824 / DSM 792 / JCM 1419 / IAM 19013 / LMG 5710 / NBRC 13948 / NRRL B-527 / VKM B-1787 / 2291 / W).